The chain runs to 245 residues: Probable phosphatase YcdX (245 aa).

Histidine 7, histidine 9, histidine 15, histidine 40, glutamate 73, histidine 101, histidine 131, aspartate 192, and histidine 194 together coordinate Zn(2+).

The protein belongs to the PHP family. As to quaternary structure, homotrimer. It depends on Zn(2+) as a cofactor.

The protein is Probable phosphatase YcdX of Shigella flexneri serotype 5b (strain 8401).